A 174-amino-acid chain; its full sequence is Translation initiation factor IF-3 (174 aa).

Belongs to the IF-3 family. Monomer.

It localises to the cytoplasm. Its function is as follows. IF-3 binds to the 30S ribosomal subunit and shifts the equilibrium between 70S ribosomes and their 50S and 30S subunits in favor of the free subunits, thus enhancing the availability of 30S subunits on which protein synthesis initiation begins. In Azorhizobium caulinodans (strain ATCC 43989 / DSM 5975 / JCM 20966 / LMG 6465 / NBRC 14845 / NCIMB 13405 / ORS 571), this protein is Translation initiation factor IF-3.